The sequence spans 1059 residues: Carbamoyl phosphate synthase large chain (1059 aa).

Residues 1–401 are carboxyphosphate synthetic domain; that stretch reads MPKRTDIHKI…ALLKAVASLE (401 aa). ATP-binding residues include Arg129, Arg169, Gly175, Gly176, Lys208, Ile210, Glu215, Gly241, Ile242, His243, Gln284, and Glu298. The region spanning 133–327 is the ATP-grasp 1 domain; the sequence is KELMQELGEP…IAKLAAKIAV (195 aa). Residues Gln284, Glu298, and Asn300 each contribute to the Mg(2+) site. Mn(2+)-binding residues include Gln284, Glu298, and Asn300. The interval 402 to 546 is oligomerization domain; sequence IDQKDLLSKE…YSTYETENES (145 aa). Residues 547–929 form a carbamoyl phosphate synthetic domain region; the sequence is RRSAKPSVLV…ALYKAFAGAG (383 aa). Residues 671-861 form the ATP-grasp 2 domain; it reads DQVIKDLNLR…MAQLATKVIL (191 aa). 10 residues coordinate ATP: Arg707, Ala746, Leu748, Glu752, Gly777, Val778, His779, Ser780, Gln820, and Glu832. Mg(2+) contacts are provided by Gln820, Glu832, and Asn834. Positions 820, 832, and 834 each coordinate Mn(2+). Residues 930 to 1059 enclose the MGS-like domain; sequence MEVPDNGAVL…EMTSFKTTEL (130 aa). The tract at residues 930-1059 is allosteric domain; sequence MEVPDNGAVL…EMTSFKTTEL (130 aa).

This sequence belongs to the CarB family. As to quaternary structure, composed of two chains; the small (or glutamine) chain promotes the hydrolysis of glutamine to ammonia, which is used by the large (or ammonia) chain to synthesize carbamoyl phosphate. Tetramer of heterodimers (alpha,beta)4. It depends on Mg(2+) as a cofactor. Requires Mn(2+) as cofactor.

It catalyses the reaction hydrogencarbonate + L-glutamine + 2 ATP + H2O = carbamoyl phosphate + L-glutamate + 2 ADP + phosphate + 2 H(+). The enzyme catalyses hydrogencarbonate + NH4(+) + 2 ATP = carbamoyl phosphate + 2 ADP + phosphate + 2 H(+). The protein operates within amino-acid biosynthesis; L-arginine biosynthesis; carbamoyl phosphate from bicarbonate: step 1/1. Its pathway is pyrimidine metabolism; UMP biosynthesis via de novo pathway; (S)-dihydroorotate from bicarbonate: step 1/3. Functionally, large subunit of the glutamine-dependent carbamoyl phosphate synthetase (CPSase). CPSase catalyzes the formation of carbamoyl phosphate from the ammonia moiety of glutamine, carbonate, and phosphate donated by ATP, constituting the first step of 2 biosynthetic pathways, one leading to arginine and/or urea and the other to pyrimidine nucleotides. The large subunit (synthetase) binds the substrates ammonia (free or transferred from glutamine from the small subunit), hydrogencarbonate and ATP and carries out an ATP-coupled ligase reaction, activating hydrogencarbonate by forming carboxy phosphate which reacts with ammonia to form carbamoyl phosphate. The chain is Carbamoyl phosphate synthase large chain from Limosilactobacillus fermentum (strain NBRC 3956 / LMG 18251) (Lactobacillus fermentum).